The primary structure comprises 124 residues: Large ribosomal subunit protein bL21 (124 aa).

The protein belongs to the bacterial ribosomal protein bL21 family. As to quaternary structure, part of the 50S ribosomal subunit. Contacts protein L20.

In terms of biological role, this protein binds to 23S rRNA in the presence of protein L20. This chain is Large ribosomal subunit protein bL21, found in Synechocystis sp. (strain ATCC 27184 / PCC 6803 / Kazusa).